Consider the following 155-residue polypeptide: Small ribosomal subunit protein uS7cz/uS7cy (155 aa).

It belongs to the universal ribosomal protein uS7 family. In terms of assembly, part of the 30S ribosomal subunit.

The protein localises to the plastid. In terms of biological role, one of the primary rRNA binding proteins, it binds directly to 16S rRNA where it nucleates assembly of the head domain of the 30S subunit. This Cuscuta exaltata (Tall dodder) protein is Small ribosomal subunit protein uS7cz/uS7cy (rps7-A).